The chain runs to 229 residues: NAD(P)H-hydrate epimerase (229 aa).

A YjeF N-terminal domain is found at 10–224 (SREVDQIAIE…DIGIPPALLD (215 aa)). A (6S)-NADPHX-binding site is contributed by 57 to 61 (NNGGD). K(+)-binding residues include asparagine 58 and aspartate 129. Residues 133-139 (GTGIRGQ) and aspartate 167 each bind (6S)-NADPHX. A K(+)-binding site is contributed by serine 170.

Belongs to the NnrE/AIBP family. The cofactor is K(+).

The catalysed reaction is (6R)-NADHX = (6S)-NADHX. The enzyme catalyses (6R)-NADPHX = (6S)-NADPHX. Catalyzes the epimerization of the S- and R-forms of NAD(P)HX, a damaged form of NAD(P)H that is a result of enzymatic or heat-dependent hydration. This is a prerequisite for the S-specific NAD(P)H-hydrate dehydratase to allow the repair of both epimers of NAD(P)HX. The polypeptide is NAD(P)H-hydrate epimerase (Rubinisphaera brasiliensis (strain ATCC 49424 / DSM 5305 / JCM 21570 / IAM 15109 / NBRC 103401 / IFAM 1448) (Planctomyces brasiliensis)).